We begin with the raw amino-acid sequence, 298 residues long: 3-hydroxyisobutyrate dehydrogenase (298 aa).

NAD(+) is bound by residues 2 to 30 (TDIA…VNVF), 65 to 66 (LP), and Thr-96. Residue Lys-171 is part of the active site. Lys-246 contributes to the NAD(+) binding site.

Belongs to the HIBADH-related family.

The catalysed reaction is 3-hydroxy-2-methylpropanoate + NAD(+) = 2-methyl-3-oxopropanoate + NADH + H(+). It functions in the pathway amino-acid degradation; L-valine degradation. This is 3-hydroxyisobutyrate dehydrogenase from Pseudomonas aeruginosa (strain ATCC 15692 / DSM 22644 / CIP 104116 / JCM 14847 / LMG 12228 / 1C / PRS 101 / PAO1).